Reading from the N-terminus, the 426-residue chain is Riboflavin biosynthesis protein PYRD, chloroplastic (426 aa).

The N-terminal 61 residues, 1–61 (MQISCLPISI…SQTGFSNPVL (61 aa)), are a transit peptide targeting the chloroplast. The CMP/dCMP-type deaminase domain maps to 72-194 (VDDSFYMRKC…RLKDAGIDVT (123 aa)). Histidine 121 serves as a coordination point for Zn(2+). Glutamate 123 serves as the catalytic Proton donor. Residues cysteine 146 and cysteine 155 each coordinate Zn(2+).

Zn(2+) is required as a cofactor.

Its subcellular location is the plastid. The protein localises to the chloroplast. It carries out the reaction 2,5-diamino-6-hydroxy-4-(5-phosphoribosylamino)-pyrimidine + H2O + H(+) = 5-amino-6-(5-phospho-D-ribosylamino)uracil + NH4(+). It participates in cofactor biosynthesis; riboflavin biosynthesis; 5-amino-6-(D-ribitylamino)uracil from GTP: step 2/4. Functionally, monofunctional pyrimidine deaminase involved in the riboflavin biosynthesis pathway. Also has a reductase domain that lacks catalytically essential substrate-binding residues. The polypeptide is Riboflavin biosynthesis protein PYRD, chloroplastic (PYRD) (Arabidopsis thaliana (Mouse-ear cress)).